A 531-amino-acid polypeptide reads, in one-letter code: Muscarinic acetylcholine receptor M5 (531 aa).

The Extracellular portion of the chain corresponds to 1–28 (MEGESYNESTVNGTPVNHQALERHGLWE). Asn-7 carries an N-linked (GlcNAc...) asparagine glycan. The helical transmembrane segment at 29-52 (VITIAVVTAVVSLMTIVGNVLVMI) threads the bilayer. Residues 53–65 (SFKVNSQLKTVNN) are Cytoplasmic-facing. A helical membrane pass occupies residues 66 to 86 (YYLLSLACADLIIGIFSMNLY). The Extracellular segment spans residues 87-103 (TTYILMGRWVLGSLACD). Residues Cys-102 and Cys-182 are joined by a disulfide bond. Residues 104–125 (LWLALDYVASNASVMNLLVISF) traverse the membrane as a helical segment. At 126–145 (DRYFSITRPLTYRAKRTPKR) the chain is on the cytoplasmic side. Residues 146 to 168 (AGIMIGLAWLVSFILWAPAILCW) traverse the membrane as a helical segment. Residues 169 to 190 (QYLVGKRTVPPDECQIQFLSEP) lie on the Extracellular side of the membrane. The chain crosses the membrane as a helical span at residues 191–213 (TITFGTAIAAFYIPVSVMTILYC). Topologically, residues 214-442 (RIYRETEKRT…LVKERKAAQT (229 aa)) are cytoplasmic. Disordered stretches follow at residues 259–295 (SLAQ…DWEK) and 327–346 (EAKE…ETVV). Residues 267–287 (QASWSSSRRSTSTTGKTTQAT) are compositionally biased toward low complexity. Over residues 334–346 (KESNTQETKETVV) the composition is skewed to polar residues. A helical transmembrane segment spans residues 443–463 (LSAILLAFIITWTPYNIMVLV). Topologically, residues 464–477 (STFCDKCVPVTLWH) are extracellular. A helical membrane pass occupies residues 478 to 497 (LGYWLCYVNSTINPICYALC). Residues 498–531 (NRTFRKTFKLLLLCRWKKKKVEEKLYWQGNSKLP) lie on the Cytoplasmic side of the membrane. A phosphothreonine mark is found at Thr-500 and Thr-504.

Belongs to the G-protein coupled receptor 1 family. Muscarinic acetylcholine receptor subfamily. CHRM5 sub-subfamily.

The protein resides in the cell membrane. It localises to the postsynaptic cell membrane. Functionally, the muscarinic acetylcholine receptor mediates various cellular responses, including inhibition of adenylate cyclase, breakdown of phosphoinositides and modulation of potassium channels through the action of G proteins. Primary transducing effect is Pi turnover. This is Muscarinic acetylcholine receptor M5 (Chrm5) from Rattus norvegicus (Rat).